A 360-amino-acid polypeptide reads, in one-letter code: Amine dehydrogenase (360 aa).

It belongs to the amine dehydrogenase family. In terms of assembly, homodimer.

The enzyme catalyses a secondary alkyl amine + NAD(+) + H2O = a ketone + NH4(+) + NADH + H(+). It carries out the reaction a secondary alkyl amine + NADP(+) + H2O = a ketone + NH4(+) + NADPH + H(+). It catalyses the reaction serinol + NAD(+) + H2O = dihydroxyacetone + NH4(+) + NADH + H(+). The catalysed reaction is serinol + NADP(+) + H2O = dihydroxyacetone + NH4(+) + NADPH + H(+). The enzyme catalyses 2-aminopropan-1-ol + NAD(+) + H2O = hydroxyacetone + NH4(+) + NADH + H(+). It carries out the reaction (R)-1-phenylethylamine + NAD(+) + H2O = acetophenone + NH4(+) + NADH + H(+). It catalyses the reaction (S)-1-phenylethylamine + NAD(+) + H2O = acetophenone + NH4(+) + NADH + H(+). The catalysed reaction is (2S)-2-aminobutan-1-ol + NAD(+) + H2O = 1-hydroxy-2-butanone + NH4(+) + NADH + H(+). The enzyme catalyses (2S)-2-amino-3-methylbutan-1-ol + NAD(+) + H2O = 1-hydroxy-3-methylbutan-2-one + NH4(+) + NADH + H(+). It carries out the reaction 2-aminopentan-1-ol + NAD(+) + H2O = 1-hydroxypentan-2-one + NH4(+) + NADH + H(+). It catalyses the reaction (S)-leucinol + NAD(+) + H2O = 1-hydroxy-4-methylpentan-2-one + NH4(+) + NADH + H(+). The catalysed reaction is (S)-isoleucinol + NAD(+) + H2O = (3S)-1-hydroxy-3-methylpentan-2-one + NH4(+) + NADH + H(+). The enzyme catalyses (S)-methioninol + NAD(+) + H2O = 1-hydroxy-4-(methythio)butan-2-one + NH4(+) + NADH + H(+). It carries out the reaction 2-aminocyclohexanol + NAD(+) + H2O = 2-hydroxycyclohexan-1-one + NH4(+) + NADH + H(+). It catalyses the reaction L-alanine + NAD(+) + H2O = pyruvate + NH4(+) + NADH + H(+). The catalysed reaction is D-alanine + NAD(+) + H2O = pyruvate + NH4(+) + NADH + H(+). The enzyme catalyses L-aspartate + NAD(+) + H2O = oxaloacetate + NH4(+) + NADH + H(+). It carries out the reaction D-aspartate + NAD(+) + H2O = oxaloacetate + NH4(+) + NADH + H(+). It catalyses the reaction L-glutamate + NAD(+) + H2O = 2-oxoglutarate + NH4(+) + NADH + H(+). The catalysed reaction is D-glutamate + NAD(+) + H2O = 2-oxoglutarate + NH4(+) + NADH + H(+). The enzyme catalyses L-serine + NAD(+) + H2O = 3-hydroxypyruvate + NH4(+) + NADH + H(+). It carries out the reaction D-serine + NAD(+) + H2O = 3-hydroxypyruvate + NH4(+) + NADH + H(+). It catalyses the reaction methylamine + NAD(+) + H2O = formaldehyde + NH4(+) + NADH + H(+). The catalysed reaction is ethylamine + NAD(+) + H2O = acetaldehyde + NH4(+) + NADH + H(+). The enzyme catalyses propylamine + NAD(+) + H2O = propanal + NH4(+) + NADH + H(+). It carries out the reaction butylamine + NAD(+) + H2O = butanal + NH4(+) + NADH + H(+). It catalyses the reaction hexylamine + NAD(+) + H2O = hexanal + NH4(+) + NADH + H(+). The catalysed reaction is octylamine + NAD(+) + H2O = octanal + NH4(+) + NADH + H(+). The enzyme catalyses (R)-sec-butylamine + NAD(+) + H2O = butan-2-one + NH4(+) + NADH + H(+). It carries out the reaction (S)-sec-butylamine + NAD(+) + H2O = butan-2-one + NH4(+) + NADH + H(+). It catalyses the reaction 2-aminopentane + NAD(+) + H2O = pentan-2-one + NH4(+) + NADH + H(+). The catalysed reaction is 3-aminopentane + NAD(+) + H2O = pentan-3-one + NH4(+) + NADH + H(+). The enzyme catalyses (2R)-heptan-2-amine + NAD(+) + H2O = heptan-2-one + NH4(+) + NADH + H(+). It carries out the reaction (2S)-heptan-2-amine + NAD(+) + H2O = heptan-2-one + NH4(+) + NADH + H(+). It catalyses the reaction benzylamine + NAD(+) + H2O = benzaldehyde + NH4(+) + NADH + H(+). The catalysed reaction is 3-aminobutan-2-ol + NAD(+) + H2O = acetoin + NH4(+) + NADH + H(+). The enzyme catalyses 3-aminobutan-1-ol + NAD(+) + H2O = 4-hydroxybutan-2-one + NH4(+) + NADH + H(+). It carries out the reaction 5-hydroxypentan-2-amine + NAD(+) + H2O = 5-hydroxypentan-2-one + NH4(+) + NADH + H(+). It catalyses the reaction 4-hydroxyhexan-3-amine + NAD(+) + H2O = 4-hydroxyhexan-3-one + NH4(+) + NADH + H(+). The catalysed reaction is 5-hydroxyoctan-4-amine + NAD(+) + H2O = 5-hydroxyoctan-4-one + NH4(+) + NADH + H(+). The enzyme catalyses 2-hydroxy-1-phenylethan-1-amine + NAD(+) + H2O = 2-hydroxyacetophenone + NH4(+) + NADH + H(+). It carries out the reaction hexan-2-amine + NAD(+) + H2O = hexan-2-one + NH4(+) + NADH + H(+). It catalyses the reaction 4-phenylbutan-2-amine + NAD(+) + H2O = 4-phenylbutan-2-one + NH4(+) + NADH + H(+). Catalyzes the reversible oxidative deaminations of a broad range of amines, amino alcohols and amino acids. Catalyzes the reversible dehydrogenation of serinol in the presence of NAD(+) to give dihydroxyacetone, ammonium ion and NADH, while NADP(+) shows a slight activity. Is also able to produce 2-amino-1-propanol and aspartate by the reductive amination of the corresponding keto alcohol (hydroxyacetone) and keto acid (oxaloacetate) in the presence of ammonium ions and NADH, and that of acetophenone from phenylethylamine by the oxidative deamination in the presence of NAD(+). This Streptomyces virginiae (Streptomyces cinnamonensis) protein is Amine dehydrogenase.